The sequence spans 424 residues: Probable aminotransferase TAT4 (424 aa).

Belongs to the class-I pyridoxal-phosphate-dependent aminotransferase family. Pyridoxal 5'-phosphate serves as cofactor.

The chain is Probable aminotransferase TAT4 from Arabidopsis thaliana (Mouse-ear cress).